A 175-amino-acid chain; its full sequence is Coagulogen (175 aa).

Intrachain disulfides connect Cys-8–Cys-167, Cys-10–Cys-95, Cys-60–Cys-161, Cys-65–Cys-121, Cys-75–Cys-168, Cys-88–Cys-140, Cys-127–Cys-170, and Cys-134–Cys-172.

Belongs to the coagulin family. In terms of assembly, coagulogen is cleaved after Arg-18 and Arg-46 by a clotting enzyme contained in the hemocyte and activated by a bacterial endotoxin (lipopolysaccharide). This cleavage releases the peptide C and leaves 2 chains of coagulin, A and B, linked by two disulfide bonds. Coagulin molecules interlink to form a gel. As to expression, hemolymph.

The protein resides in the secreted. Coagulogen is a gel-forming protein of hemolymph; it hinders the spread of invaders by immobilizing them. The chain is Coagulogen from Tachypleus gigas (Southeast Asian horseshoe crab).